The chain runs to 737 residues: Zinc finger protein 280C (737 aa).

Residues K5, K10, K14, K33, and K55 each participate in a glycyl lysine isopeptide (Lys-Gly) (interchain with G-Cter in SUMO2) cross-link. The segment covering A57–H66 has biased composition (polar residues). Positions A57–S137 are disordered. K75 participates in a covalent cross-link: Glycyl lysine isopeptide (Lys-Gly) (interchain with G-Cter in SUMO2). Residue S80 is modified to Phosphoserine. The span at S112–N123 shows a compositional bias: polar residues. Glycyl lysine isopeptide (Lys-Gly) (interchain with G-Cter in SUMO2) cross-links involve residues K113, K126, K167, K174, K180, and K187. A compositionally biased stretch (polar residues) spans P176 to T185. The segment at P176 to T223 is disordered. The segment covering P211–T223 has biased composition (polar residues). T223 carries the post-translational modification Phosphothreonine. Phosphoserine is present on S227. K273 is covalently cross-linked (Glycyl lysine isopeptide (Lys-Gly) (interchain with G-Cter in SUMO2)). 5 C2H2-type zinc fingers span residues F316–H338, T353–H376, T383–H406, Y413–H436, and H470–H492. Residue K522 forms a Glycyl lysine isopeptide (Lys-Gly) (interchain with G-Cter in SUMO2) linkage. The segment covering S535–K579 has biased composition (polar residues). The tract at residues S535–K602 is disordered. The residue at position 540 (T540) is a Phosphothreonine. Residues K564 and K574 each participate in a glycyl lysine isopeptide (Lys-Gly) (interchain with G-Cter in SUMO2) cross-link. The span at P580–K602 shows a compositional bias: basic residues.

Its subcellular location is the nucleus. In terms of biological role, may function as a transcription factor. The polypeptide is Zinc finger protein 280C (ZNF280C) (Homo sapiens (Human)).